Reading from the N-terminus, the 630-residue chain is Mitochondrial Rho GTPase 1 (630 aa).

One can recognise a Miro 1 domain in the interval 1–168 (MKEVRVVICG…FYMCRACVIY (168 aa)). Over 1–598 (MKEVRVVICG…EEDSNKTNYQ (598 aa)) the chain is Cytoplasmic. Residues 10 to 17 (GDQGVGKS), 57 to 61 (DTQSD), and 113 to 116 (NKSE) each bind GTP. 2 consecutive EF-hand domains span residues 184–219 (ATIHALSRIFFLIDKNNDDLLSVDELNSLSEKCFSK) and 304–339 (KGYRFLVDLFYQFDRDNDGALNNEELSALFRHTPGL). Residues Asp197, Asn199, Asp201, Glu208, Asp317, Asp319, Asp321, and Glu328 each coordinate Ca(2+). In terms of domain architecture, Miro 2 spans 419-579 (RNVFLCFVVG…FIQLAESAQY (161 aa)). GTP-binding positions include 428 to 435 (GSKSCGKT), 459 to 463 (EFQST), and 527 to 530 (TKAD). A helical; Anchor for type IV membrane protein membrane pass occupies residues 599-619 (LVAALTAFGALLLSVGGSLTW). The Mitochondrial intermembrane segment spans residues 620 to 630 (KIIKHQYYSKK).

This sequence belongs to the mitochondrial Rho GTPase family.

The protein resides in the mitochondrion outer membrane. Functionally, mitochondrial GTPase involved in mitochondrial trafficking. Probably involved in control of anterograde transport of mitochondria and their subcellular distribution. This is Mitochondrial Rho GTPase 1 (gem1) from Schizosaccharomyces pombe (strain 972 / ATCC 24843) (Fission yeast).